The sequence spans 286 residues: Phosphoribosylaminoimidazole-succinocarboxamide synthase (286 aa).

The protein belongs to the SAICAR synthetase family.

The enzyme catalyses 5-amino-1-(5-phospho-D-ribosyl)imidazole-4-carboxylate + L-aspartate + ATP = (2S)-2-[5-amino-1-(5-phospho-beta-D-ribosyl)imidazole-4-carboxamido]succinate + ADP + phosphate + 2 H(+). The protein operates within purine metabolism; IMP biosynthesis via de novo pathway; 5-amino-1-(5-phospho-D-ribosyl)imidazole-4-carboxamide from 5-amino-1-(5-phospho-D-ribosyl)imidazole-4-carboxylate: step 1/2. This is Phosphoribosylaminoimidazole-succinocarboxamide synthase from Mannheimia succiniciproducens (strain KCTC 0769BP / MBEL55E).